A 202-amino-acid chain; its full sequence is Large ribosomal subunit protein uL18 (202 aa).

This sequence belongs to the universal ribosomal protein uL18 family. In terms of assembly, part of the 50S ribosomal subunit. Contacts the 5S and 23S rRNAs.

This is one of the proteins that bind and probably mediate the attachment of the 5S RNA into the large ribosomal subunit, where it forms part of the central protuberance. In Methanopyrus kandleri (strain AV19 / DSM 6324 / JCM 9639 / NBRC 100938), this protein is Large ribosomal subunit protein uL18.